The following is a 478-amino-acid chain: Adenosylhomocysteinase (478 aa).

The substrate site is built by threonine 67, aspartate 144, and glutamate 204. 205 to 207 provides a ligand contact to NAD(+); that stretch reads TTT. The substrate site is built by lysine 234 and aspartate 238. Residues asparagine 239, 268–273, glutamate 291, asparagine 326, 347–349, and asparagine 392 each bind NAD(+); these read GYGDVG and IGH.

The protein belongs to the adenosylhomocysteinase family. NAD(+) is required as a cofactor.

Its subcellular location is the cytoplasm. It carries out the reaction S-adenosyl-L-homocysteine + H2O = L-homocysteine + adenosine. The protein operates within amino-acid biosynthesis; L-homocysteine biosynthesis; L-homocysteine from S-adenosyl-L-homocysteine: step 1/1. In terms of biological role, may play a key role in the regulation of the intracellular concentration of adenosylhomocysteine. The sequence is that of Adenosylhomocysteinase from Nitrosomonas eutropha (strain DSM 101675 / C91 / Nm57).